The chain runs to 332 residues: Protoheme IX farnesyltransferase (332 aa).

Helical transmembrane passes span 63 to 83, 109 to 129, 132 to 152, 160 to 180, 188 to 208, 245 to 265, and 286 to 306; these read LICT…LNCL, TVFL…ISGV, LAAG…TIIL, IVFG…AATG, WLFG…AILL, ILGV…LLPF, and AKGL…LLLI.

This sequence belongs to the UbiA prenyltransferase family. Protoheme IX farnesyltransferase subfamily.

Its subcellular location is the cell inner membrane. It carries out the reaction heme b + (2E,6E)-farnesyl diphosphate + H2O = Fe(II)-heme o + diphosphate. It participates in porphyrin-containing compound metabolism; heme O biosynthesis; heme O from protoheme: step 1/1. Converts heme B (protoheme IX) to heme O by substitution of the vinyl group on carbon 2 of heme B porphyrin ring with a hydroxyethyl farnesyl side group. The sequence is that of Protoheme IX farnesyltransferase from Prochlorococcus marinus (strain MIT 9515).